Consider the following 452-residue polypeptide: MNKILIAAASSGTGKTTITLGIMHALKKRGLRVQPFKVGPDYIDTNYHQAITGVASINLDSFLIDDDAMLATLFQKHGESADISVIEGVMGLFDGLGIDRDNSSTSFIAKCTKTPVILVVDGKAISTSAAAIVDGFNRFDPELTIAGVIINRVASENHFSLIKGAIERYTDVPVLGYLPKNAAVALPERHLGLVPKEEMTELETKWELLGDLIAEHVDLDRLLAISKTGAKLTVHPPEIQVPDFSGVRVAYALDAAFHFYYQDNLDFIRSTGATLIPFSPLEEREVPDADFIYIGGGFPEVFAEQLAKNKSMRESILAAHEQGKPIYAECGGLMYLGSSLEMEAESYEMVGVFDGVSKMTTRLRKFGYCIAEPLEDTLLGKKGTAIRGHEFHHSVFETTEPTRMKLTKKRDGKIVKEWHGGYQKGNTFASYLHIHFYQNLLIITHMFGAIER.

One can recognise a GATase cobBQ-type domain in the interval 248-441; sequence RVAYALDAAF…LHIHFYQNLL (194 aa). The active-site Nucleophile is Cys-330.

This sequence belongs to the CobB/CbiA family. The cofactor is Mg(2+).

The enzyme catalyses cob(II)yrinate + 2 L-glutamine + 2 ATP + 2 H2O = cob(II)yrinate a,c diamide + 2 L-glutamate + 2 ADP + 2 phosphate + 2 H(+). It functions in the pathway cofactor biosynthesis; adenosylcobalamin biosynthesis; cob(II)yrinate a,c-diamide from sirohydrochlorin (anaerobic route): step 10/10. In terms of biological role, catalyzes the ATP-dependent amidation of the two carboxylate groups at positions a and c of cobyrinate, using either L-glutamine or ammonia as the nitrogen source. This is Cobyrinate a,c-diamide synthase from Listeria monocytogenes serotype 4b (strain F2365).